A 225-amino-acid chain; its full sequence is Membrane protein (225 aa).

Over 1–20 (MDNTTNCTLGTEQAVQLFKE) the chain is Virion surface. Residues 21 to 41 (YNLFVTAFLLFLTILLQYGYA) traverse the membrane as a helical segment. Residues 42–51 (TRNKVIYILK) lie on the Intravirion side of the membrane. The helical transmembrane segment at 52–72 (MIVLWCFWPLNIAVGAISCIY) threads the bilayer. The Virion surface segment spans residues 73-77 (PPNTG). Residues 78-98 (GLVAAIILTVFACLSFIGYWI) form a helical membrane-spanning segment. Residues 99–225 (QSFRLFKRCR…VATGGSSLYT (127 aa)) lie on the Intravirion side of the membrane.

This sequence belongs to the gammacoronaviruses M protein family. As to quaternary structure, homomultimer. Interacts with envelope E protein in the budding compartment of the host cell, which is located between endoplasmic reticulum and the Golgi complex. Forms a complex with HE and S proteins. Interacts with nucleocapsid N protein. This interaction probably participates in RNA packaging into the virus.

Its subcellular location is the virion membrane. The protein resides in the host Golgi apparatus membrane. Its function is as follows. Component of the viral envelope that plays a central role in virus morphogenesis and assembly via its interactions with other viral proteins. The polypeptide is Membrane protein (Avian infectious bronchitis virus (strain 6/82) (IBV)).